A 58-amino-acid chain; its full sequence is Small ribosomal subunit protein bS21 (58 aa).

The disordered stretch occupies residues 37–58; sequence FYEKPSVKRKRKSEAARKRKKF. Over residues 43–58 the composition is skewed to basic residues; it reads VKRKRKSEAARKRKKF.

The protein belongs to the bacterial ribosomal protein bS21 family.

The chain is Small ribosomal subunit protein bS21 from Streptococcus sanguinis (strain SK36).